The primary structure comprises 85 residues: Cell division topological specificity factor (85 aa).

Belongs to the MinE family.

Prevents the cell division inhibition by proteins MinC and MinD at internal division sites while permitting inhibition at polar sites. This ensures cell division at the proper site by restricting the formation of a division septum at the midpoint of the long axis of the cell. In Deinococcus geothermalis (strain DSM 11300 / CIP 105573 / AG-3a), this protein is Cell division topological specificity factor.